A 230-amino-acid chain; its full sequence is Large ribosomal subunit protein uL1 (230 aa).

This sequence belongs to the universal ribosomal protein uL1 family. Part of the 50S ribosomal subunit.

In terms of biological role, binds directly to 23S rRNA. The L1 stalk is quite mobile in the ribosome, and is involved in E site tRNA release. Its function is as follows. Protein L1 is also a translational repressor protein, it controls the translation of the L11 operon by binding to its mRNA. The polypeptide is Large ribosomal subunit protein uL1 (Ruminiclostridium cellulolyticum (strain ATCC 35319 / DSM 5812 / JCM 6584 / H10) (Clostridium cellulolyticum)).